The primary structure comprises 515 residues: 1-pyrroline-5-carboxylate dehydrogenase (515 aa).

Active-site residues include Glu286 and Cys320.

Belongs to the aldehyde dehydrogenase family. RocA subfamily.

It carries out the reaction L-glutamate 5-semialdehyde + NAD(+) + H2O = L-glutamate + NADH + 2 H(+). The protein operates within amino-acid degradation; L-proline degradation into L-glutamate; L-glutamate from L-proline: step 2/2. The chain is 1-pyrroline-5-carboxylate dehydrogenase from Bacillus cytotoxicus (strain DSM 22905 / CIP 110041 / 391-98 / NVH 391-98).